The chain runs to 273 residues: Epidermal growth factor-like protein 7 (273 aa).

The first 23 residues, 1–23 (MRGSQEVLLMWLLVLAVGGTEHA), serve as a signal peptide directing secretion. The 78-residue stretch at 27 to 104 (GRRVCAVRAH…TSGLPGACGA (78 aa)) folds into the EMI domain. Disulfide bonds link C31-C89, C56-C62, C88-C102, C107-C117, C111-C123, C125-C134, C141-C152, C148-C161, and C163-C176. In terms of domain architecture, EGF-like 1 spans 103 to 135 (GAAICQPPCRNGGSCVQPGRCRCPAGWRGDTCQ). The Cell attachment site signature appears at 130-132 (RGD). Residues 137 to 177 (DVDECSARRGGCPQRCVNTAGSYWCQCWEGHSLSADGTLCV) form the EGF-like 2; calcium-binding domain. Positions 192 to 219 (VDSAMKEEVQRLQSRVDLLEEKLQLVLA) form a coiled coil.

Interacts with ITGAV/ITGB3 in an RGD-dependent manner, increasing endothelial cell's motility.

It localises to the secreted. Its subcellular location is the extracellular space. Its function is as follows. Regulates vascular tubulogenesis in vivo. Inhibits platelet-derived growth factor (PDGF)-BB-induced smooth muscle cell migration and promotes endothelial cell adhesion to the extracellular matrix and angiogenesis. The chain is Epidermal growth factor-like protein 7 (EGFL7) from Homo sapiens (Human).